The primary structure comprises 542 residues: Major facilitator superfamily transporter mfsA (542 aa).

11 consecutive transmembrane segments (helical) span residues 19-39, 70-90, 99-119, 127-149, 160-180, 194-214, 321-341, 349-369, 380-400, 413-432, and 444-464; these read FAAV…AGLL, GAVT…SMFC, LIFM…VCYT, FVIG…PVWQ, FLVC…YWVV, FPVA…LMLP, IMGG…FFMI, LYLI…ACLI, AVGI…LPWI, VGAS…VVMF, and VYLF…FFYV.

It belongs to the major facilitator superfamily. Sugar transporter (TC 2.A.1.1) family.

It is found in the membrane. Functionally, major facilitator superfamily transporter that may be involved in A.fumigatus adaptation to azoles such as vorizonazole. This chain is Major facilitator superfamily transporter mfsA, found in Aspergillus fumigatus (strain ATCC MYA-4609 / CBS 101355 / FGSC A1100 / Af293) (Neosartorya fumigata).